Reading from the N-terminus, the 292-residue chain is Undecaprenyl-diphosphatase 2 (292 aa).

Transmembrane regions (helical) follow at residues Trp-89 to Ile-109, Leu-118 to Ser-138, Phe-203 to Gly-223, Pro-232 to Leu-252, and Phe-263 to Leu-283.

This sequence belongs to the UppP family.

Its subcellular location is the cell membrane. The enzyme catalyses di-trans,octa-cis-undecaprenyl diphosphate + H2O = di-trans,octa-cis-undecaprenyl phosphate + phosphate + H(+). Catalyzes the dephosphorylation of undecaprenyl diphosphate (UPP). Confers resistance to bacitracin. The sequence is that of Undecaprenyl-diphosphatase 2 from Frankia casuarinae (strain DSM 45818 / CECT 9043 / HFP020203 / CcI3).